A 364-amino-acid chain; its full sequence is tRNA/tmRNA (uracil-C(5))-methyltransferase (364 aa).

Residues Gln188, Tyr216, Asn221, Glu237, and Asp297 each coordinate S-adenosyl-L-methionine. The active-site Nucleophile is Cys322. The active-site Proton acceptor is the Glu356.

This sequence belongs to the class I-like SAM-binding methyltransferase superfamily. RNA M5U methyltransferase family. TrmA subfamily.

It carries out the reaction uridine(54) in tRNA + S-adenosyl-L-methionine = 5-methyluridine(54) in tRNA + S-adenosyl-L-homocysteine + H(+). The catalysed reaction is uridine(341) in tmRNA + S-adenosyl-L-methionine = 5-methyluridine(341) in tmRNA + S-adenosyl-L-homocysteine + H(+). Functionally, dual-specificity methyltransferase that catalyzes the formation of 5-methyluridine at position 54 (m5U54) in all tRNAs, and that of position 341 (m5U341) in tmRNA (transfer-mRNA). The protein is tRNA/tmRNA (uracil-C(5))-methyltransferase of Mannheimia succiniciproducens (strain KCTC 0769BP / MBEL55E).